The sequence spans 91 residues: Alpha-defensin-related sequence 10 (91 aa).

A signal peptide spans 1-19; it reads MKKLVLLSAFVLLAFQVQA. A propeptide spanning residues 20–65 is cleaved from the precursor; it reads DSIQNTDEETKTEEQPGEENQAMSVSFGDPEGSALQDAAVGMARPC. A disordered region spans residues 21 to 52; the sequence is SIQNTDEETKTEEQPGEENQAMSVSFGDPEGS. 7 consecutive repeat copies span residues 65 to 67, 68 to 70, 71 to 73, 74 to 76, 77 to 79, 80 to 82, and 83 to 85. The 7 X 3 AA tandem repeats of C-P-X stretch occupies residues 65 to 85; it reads CPPCPSCPSCPWCPMCPRCPS.

Belongs to the alpha-defensin family. Paneth cells of the small bowel.

It is found in the secreted. Its function is as follows. Apparent precursor of a secreted, cationic, proline- and cysteine-rich peptide that contains Cys-Pro-Xaa repeats. Unlike cryptdin, the proposed mature peptide region lacks the structural motif characteristic of defensins. It may have microbicidal activities. This chain is Alpha-defensin-related sequence 10 (Defa-rs10), found in Mus musculus (Mouse).